A 206-amino-acid chain; its full sequence is Protein GrpE (206 aa).

This sequence belongs to the GrpE family. As to quaternary structure, homodimer.

The protein localises to the cytoplasm. In terms of biological role, participates actively in the response to hyperosmotic and heat shock by preventing the aggregation of stress-denatured proteins, in association with DnaK and GrpE. It is the nucleotide exchange factor for DnaK and may function as a thermosensor. Unfolded proteins bind initially to DnaJ; upon interaction with the DnaJ-bound protein, DnaK hydrolyzes its bound ATP, resulting in the formation of a stable complex. GrpE releases ADP from DnaK; ATP binding to DnaK triggers the release of the substrate protein, thus completing the reaction cycle. Several rounds of ATP-dependent interactions between DnaJ, DnaK and GrpE are required for fully efficient folding. The chain is Protein GrpE from Psychromonas ingrahamii (strain DSM 17664 / CCUG 51855 / 37).